A 153-amino-acid polypeptide reads, in one-letter code: Putative phosphatidylglycerol/phosphatidylinositol transfer protein DDB_G0285639 (153 aa).

Residues 1 to 21 (MIIKILLLIISISLFLNISIG) form the signal peptide. 5 N-linked (GlcNAc...) asparagine glycosylation sites follow: Asn-17, Asn-61, Asn-87, Asn-117, and Asn-140.

This sequence belongs to the NPC2 family. Monomer.

In terms of biological role, catalyzes the intermembrane transfer of phosphatidylglycerol and phosphatidylinositol. The sequence is that of Putative phosphatidylglycerol/phosphatidylinositol transfer protein DDB_G0285639 from Dictyostelium discoideum (Social amoeba).